The chain runs to 667 residues: YTH domain-containing protein ECT2 (667 aa).

2 disordered regions span residues 264-305 and 379-398; these read QRPV…PSSV and NELN…GNLD. The segment covering 267-285 has biased composition (low complexity); it reads VSGSGVASSYSKSSTVPSS. The span at 286-305 shows a compositional bias: polar residues; it reads RNQNYRSNSHYTSVHQPSSV. Positions 442–579 constitute a YTH domain; that stretch reads AMFFIIKSYS…EQGLKIVKIF (138 aa). Residues 448–450, Asp-454, 464–465, Asn-497, Trp-521, Trp-526, and Trp-534 each bind RNA; these read KSY and WA. A disordered region spans residues 606–667; sequence KAKQTQKQVS…VTGDVVANGC (62 aa). A compositionally biased stretch (basic and acidic residues) spans 614–627; the sequence is VSEEKVTDEKKESA. Over residues 628–639 the composition is skewed to low complexity; sequence TAESASKESPAA.

Interacts (via C-terminus) with CIPK1. As to expression, expressed in the shoot apex, at the sites of leaf formation, and in emerging leaves. Highly expressed in rapidly developing tissues.

Its subcellular location is the cytoplasm. The protein localises to the nucleus. Functionally, specifically recognizes and binds N6-methyladenosine (m6A)-containing RNAs, and regulates mRNA stability. M6A is a modification present at internal sites of mRNAs and some non-coding RNAs and plays a role in mRNA stability and processing. Binds preferentially in the 3'UTRs of target genes. May play dual roles in regulating 3'UTR processing in the nucleus and facilitating mRNA stability in the cytoplasm. Required for the correct timing of leaf formation and normal leaf morphology. Functions redundantly with ECT3. Required for proper trichome branching and morphology. Controls trichome morphology by binding transcripts related to trichome morphogenesis and affecting their stability. This Arabidopsis thaliana (Mouse-ear cress) protein is YTH domain-containing protein ECT2.